The primary structure comprises 396 residues: L-aspartate--glyoxylate aminotransferase (396 aa).

Position 196 is an N6-(pyridoxal phosphate)lysine (Lys196).

This sequence belongs to the class-V pyridoxal-phosphate-dependent aminotransferase family. It depends on pyridoxal 5'-phosphate as a cofactor.

The catalysed reaction is oxaloacetate + glycine = glyoxylate + L-aspartate. Functionally, catalyzes the transamination of glyoxylate into glycine using L-aspartate as the preferred amino group donor. Is essential for the growth of P.denitrificans in the presence of glycolate and glyoxylate since it functions in glyoxylate assimilation via the beta-hydroxyaspartate cycle (BHAC). Can catalyze the reverse reaction in vitro, and also use L-serine and L-glutamate as amino group donor, but with much less efficiency than L-aspartate. This is L-aspartate--glyoxylate aminotransferase from Paracoccus denitrificans (strain Pd 1222).